Consider the following 172-residue polypeptide: C-phycocyanin beta chain (172 aa).

(2R,3E)-phycocyanobilin is bound by residues asparagine 35, aspartate 39, asparagine 72, arginine 77, cysteine 82, 82–88 (CLRDMEI), 149–151 (TIG), and cysteine 153. Asparagine 72 is subject to N4-methylasparagine.

Belongs to the phycobiliprotein family. As to quaternary structure, heterodimer of an alpha and a beta subunit, which further assembles into trimers and the trimers into hexamers. The basic functional unit of phycobiliproteins is a ring-shaped hexamer formed from two back-to-back trimers contacting via the alpha chain subunits. The trimers are composed of alpha/beta subunit heterodimers arranged around a three-fold axis of symmetry. The phycoerythrins also contain a gamma subunit which is located in the center of the hexamer. Contains two covalently linked phycocyanobilin chromophores.

It localises to the plastid. The protein resides in the chloroplast thylakoid membrane. Light-harvesting photosynthetic tetrapyrrole chromophore-protein from the phycobiliprotein complex (phycobilisome, PBS). Phycocyanin is the major phycobiliprotein in the PBS rod. The protein is C-phycocyanin beta chain (cpcB) of Cyanidium caldarium (Red alga).